We begin with the raw amino-acid sequence, 349 residues long: UPF0283 membrane protein Ent638_2153 (349 aa).

3 consecutive transmembrane segments (helical) span residues 70–90 (MVTAGLTLFGISVVGQGVQWT), 99–119 (WVALGGCAAGALIIGAGVGSV), and 213–233 (ESTLMIAVSPLALVDMAFIAW).

The protein belongs to the UPF0283 family.

It localises to the cell inner membrane. The protein is UPF0283 membrane protein Ent638_2153 of Enterobacter sp. (strain 638).